The primary structure comprises 467 residues: Coiled-coil domain-containing protein 174 (467 aa).

Disordered regions lie at residues 40-77 (VFGKPKTTNKKPSIWSKQNVGVSNRAEKDAEQKIEEQK) and 124-162 (EMEASGAHRDSQKAGERDDDEENLPEGEIPPPQDPSEEW). A coiled-coil region spans residues 63–99 (NRAEKDAEQKIEEQKTLDKAREKLEEKAKLYEKMTKG). Basic and acidic residues-rich tracts occupy residues 64-77 (RAEKDAEQKIEEQK) and 124-139 (EMEASGAHRDSQKAGE). The residue at position 197 (Ser-197) is a Phosphoserine. The stretch at 267-309 (LEMLREQTTDQRTKRENIKEKRKAILEARLAKLRQKKMKKSKE) forms a coiled coil. 2 disordered regions span residues 299 to 363 (LRQK…HIRE) and 378 to 453 (RQSD…TVTF). Positions 324 to 336 (PLPPEPEAVPTPR) are enriched in pro residues. Basic and acidic residues-rich tracts occupy residues 348–363 (VQERKDTKPGVPHIRE) and 378–389 (RQSDLRAERDPE). Residues 425-437 (PDQSHGPSPEHTS) are compositionally biased toward polar residues. Residues 439–448 (TPAPDNPPQA) are compositionally biased toward pro residues.

As to expression, widely expressed.

The protein localises to the nucleus. Its function is as follows. Probably involved in neuronal development. This is Coiled-coil domain-containing protein 174 (CCDC174) from Homo sapiens (Human).